Consider the following 753-residue polypeptide: 5-methyltetrahydropteroyltriglutamate--homocysteine methyltransferase (753 aa).

Residues 17-20 (RELK) and lysine 117 each bind 5-methyltetrahydropteroyltri-L-glutamate. Residues 431-433 (IGS) and glutamate 484 each bind L-homocysteine. L-methionine is bound by residues 431–433 (IGS) and glutamate 484. Residues 515–516 (RC) and tryptophan 561 each bind 5-methyltetrahydropteroyltri-L-glutamate. Aspartate 599 provides a ligand contact to L-homocysteine. Position 599 (aspartate 599) interacts with L-methionine. Glutamate 605 is a binding site for 5-methyltetrahydropteroyltri-L-glutamate. 3 residues coordinate Zn(2+): histidine 641, cysteine 643, and glutamate 665. The active-site Proton donor is histidine 694. Cysteine 726 serves as a coordination point for Zn(2+).

The protein belongs to the vitamin-B12 independent methionine synthase family. It depends on Zn(2+) as a cofactor.

It catalyses the reaction 5-methyltetrahydropteroyltri-L-glutamate + L-homocysteine = tetrahydropteroyltri-L-glutamate + L-methionine. It functions in the pathway amino-acid biosynthesis; L-methionine biosynthesis via de novo pathway; L-methionine from L-homocysteine (MetE route): step 1/1. In terms of biological role, catalyzes the transfer of a methyl group from 5-methyltetrahydrofolate to homocysteine resulting in methionine formation. This Shigella boydii serotype 4 (strain Sb227) protein is 5-methyltetrahydropteroyltriglutamate--homocysteine methyltransferase.